A 254-amino-acid polypeptide reads, in one-letter code: Polysaccharide deacetylase domain-containing protein ECU11_0510 (254 aa).

The NodB homology domain maps to 26 to 210 (GMIAINFVDG…IGKDKGYRFV (185 aa)).

The sequence is that of Polysaccharide deacetylase domain-containing protein ECU11_0510 from Encephalitozoon cuniculi (strain GB-M1) (Microsporidian parasite).